A 300-amino-acid chain; its full sequence is Putative 1-phosphofructokinase (300 aa).

ATP contacts are provided by residues 214–219 (SDGAQG) and 246–247 (GD). Asp247 functions as the Proton acceptor in the catalytic mechanism.

It belongs to the carbohydrate kinase PfkB family.

The catalysed reaction is beta-D-fructose 1-phosphate + ATP = beta-D-fructose 1,6-bisphosphate + ADP + H(+). Functionally, catalyzes the ATP-dependent phosphorylation of fructose-l-phosphate to fructose-l,6-bisphosphate. The chain is Putative 1-phosphofructokinase (fruK) from Mycoplasma pneumoniae (strain ATCC 29342 / M129 / Subtype 1) (Mycoplasmoides pneumoniae).